Here is a 333-residue protein sequence, read N- to C-terminus: Nucleoid-associated protein YE1421 (333 aa).

It belongs to the YejK family.

It localises to the cytoplasm. It is found in the nucleoid. The protein is Nucleoid-associated protein YE1421 of Yersinia enterocolitica serotype O:8 / biotype 1B (strain NCTC 13174 / 8081).